The following is a 352-amino-acid chain: Galactokinase (352 aa).

17 to 20 (EHTD) is a substrate binding site. ATP contacts are provided by residues Ser-49 and 101 to 107 (GAGLSSS). 2 residues coordinate Mg(2+): Ser-107 and Glu-139. Catalysis depends on Asp-151, which acts as the Proton acceptor. Tyr-200 provides a ligand contact to substrate.

It belongs to the GHMP kinase family. GalK subfamily. In terms of assembly, monomer.

It localises to the cytoplasm. It catalyses the reaction alpha-D-galactose + ATP = alpha-D-galactose 1-phosphate + ADP + H(+). The protein operates within carbohydrate metabolism; galactose metabolism. Functionally, catalyzes the transfer of the gamma-phosphate of ATP to D-galactose to form alpha-D-galactose-1-phosphate (Gal-1-P). Is very specific for its substrate, since it is not able to use D-glucose, D-fructose, D-mannose, 2-deoxy-D-glucose, and D-glucosamine as substrates. The chain is Galactokinase from Pyrococcus furiosus (strain ATCC 43587 / DSM 3638 / JCM 8422 / Vc1).